Consider the following 239-residue polypeptide: tRNA (guanine-N(7)-)-methyltransferase (239 aa).

Positions 69, 94, 121, and 144 each coordinate S-adenosyl-L-methionine. Residue Asp-144 is part of the active site. Lys-148 lines the substrate pocket. Residues 150–155 form an interaction with RNA region; sequence RHNKRR. Residues Asp-180 and 217-220 each bind substrate; that span reads TKFE.

The protein belongs to the class I-like SAM-binding methyltransferase superfamily. TrmB family. As to quaternary structure, monomer.

It catalyses the reaction guanosine(46) in tRNA + S-adenosyl-L-methionine = N(7)-methylguanosine(46) in tRNA + S-adenosyl-L-homocysteine. It functions in the pathway tRNA modification; N(7)-methylguanine-tRNA biosynthesis. In terms of biological role, catalyzes the formation of N(7)-methylguanine at position 46 (m7G46) in tRNA. The polypeptide is tRNA (guanine-N(7)-)-methyltransferase (Yersinia enterocolitica serotype O:8 / biotype 1B (strain NCTC 13174 / 8081)).